The following is a 241-amino-acid chain: Xyloglucan-specific endo-beta-1,4-glucanase 1 (241 aa).

Residues 1–19 (MKGLLAGTIAAATFAVASA) form the signal peptide. Glutamate 136 is an active-site residue. N-linked (GlcNAc...) asparagine glycosylation is found at asparagine 174 and asparagine 190. Residue glutamate 222 is part of the active site.

It belongs to the glycosyl hydrolase 12 (cellulase H) family. Interacts with host apoplastic glucanase inhibitor GIP2.

It catalyses the reaction xyloglucan + H2O = xyloglucan oligosaccharides.. With respect to regulation, the xyloglucanase activity is inhibited by the binding of the host apoplastic glucanase inhibitor GIP2. Its function is as follows. Glycoside hydrolase that exhibits xyloglucanase activity. Acts as an important virulence factor during P.parasitica infection of its host Nicotiana benthamiana. Also acts as a pathogen-associated molecular pattern (PAMP) in host species, where it can trigger defense responses including cell death. The PAMP activity is independent of its xyloglucanase activity. With paralog XLP1, is required to elevate apoplastic sugar during P.parasitica infection. This Phytophthora nicotianae (strain INRA-310) (Phytophthora parasitica) protein is Xyloglucan-specific endo-beta-1,4-glucanase 1.